The following is a 101-amino-acid chain: Urease subunit beta (101 aa).

The protein belongs to the urease beta subunit family. Heterotrimer of UreA (gamma), UreB (beta) and UreC (alpha) subunits. Three heterotrimers associate to form the active enzyme.

Its subcellular location is the cytoplasm. It catalyses the reaction urea + 2 H2O + H(+) = hydrogencarbonate + 2 NH4(+). It participates in nitrogen metabolism; urea degradation; CO(2) and NH(3) from urea (urease route): step 1/1. This Jannaschia sp. (strain CCS1) protein is Urease subunit beta.